We begin with the raw amino-acid sequence, 464 residues long: DNA repair protein KRE29 (464 aa).

Residues 1-69 (MGSVNSSPNE…SDEEFSSLEN (69 aa)) are disordered. Residues 53-65 (PENDSLNSDEEFS) show a composition bias toward acidic residues. A phosphoserine mark is found at S81 and S101.

Component of the Smc5-Smc6 complex which consists of KRE29, MMS21, NSE1, NSE3, NSE4, NSE5, SMC5 and SMC6. Interacts with NSE5.

It is found in the nucleus. The protein localises to the cytoplasm. In terms of biological role, acts in a DNA repair pathway for removal of UV-induced DNA damage that is distinct from classical nucleotide excision repair and in repair of ionizing radiation damage. Functions in homologous recombination repair of DNA double strand breaks and in recovery of stalled replication forks. The polypeptide is DNA repair protein KRE29 (KRE29) (Saccharomyces cerevisiae (strain ATCC 204508 / S288c) (Baker's yeast)).